A 396-amino-acid chain; its full sequence is Obg-like ATPase 1 (396 aa).

An OBG-type G domain is found at leucine 23–leucine 283. Asparagine 32–threonine 37 contributes to the ATP binding site. 2 residues coordinate Mg(2+): serine 36 and threonine 56. Residue leucine 231 coordinates ATP. The Nuclear export signal signature appears at leucine 267 to leucine 274. An N6-acetyllysine modification is found at lysine 294. In terms of domain architecture, TGS spans glutamine 304–phenylalanine 387.

The protein belongs to the TRAFAC class OBG-HflX-like GTPase superfamily. OBG GTPase family. YchF/OLA1 subfamily. In terms of assembly, monomer. Requires Mg(2+) as cofactor.

The protein resides in the cytoplasm. It localises to the nucleus. Its subcellular location is the nucleolus. Functionally, hydrolyzes ATP, and can also hydrolyze GTP with lower efficiency. Has lower affinity for GTP. The sequence is that of Obg-like ATPase 1 from Pongo abelii (Sumatran orangutan).